The following is a 693-amino-acid chain: Polyribonucleotide nucleotidyltransferase (693 aa).

Mg(2+)-binding residues include aspartate 489 and aspartate 495. In terms of domain architecture, KH spans 556 to 615 (PQIHIMNVNPAKIKDVVGRGGSVVKGIVEKTGAQIDTSDSGEVKIFAKDKRSLDLAKSMV). The 69-residue stretch at 625–693 (GQIYKGKIVK…GRVKLSLVAR (69 aa)) folds into the S1 motif domain.

This sequence belongs to the polyribonucleotide nucleotidyltransferase family. In terms of assembly, component of the RNA degradosome, which is a multiprotein complex involved in RNA processing and mRNA degradation. Mg(2+) is required as a cofactor.

It is found in the cytoplasm. The catalysed reaction is RNA(n+1) + phosphate = RNA(n) + a ribonucleoside 5'-diphosphate. Involved in mRNA degradation. Catalyzes the phosphorolysis of single-stranded polyribonucleotides processively in the 3'- to 5'-direction. This Francisella philomiragia subsp. philomiragia (strain ATCC 25017 / CCUG 19701 / FSC 153 / O#319-036) protein is Polyribonucleotide nucleotidyltransferase.